Reading from the N-terminus, the 613-residue chain is ATP-dependent zinc metalloprotease FtsH (613 aa).

The Cytoplasmic portion of the chain corresponds to 1–4 (MVKN). A helical transmembrane segment spans residues 5–25 (LIFWLVITVVLMSVFQNFNSS). Over 26–98 (DTSNHRVDYS…VGEIPEEPSL (73 aa)) the chain is Extracellular. Residues 99–119 (LISIFISWFPMLLLIGVWIFF) form a helical membrane-spanning segment. At 120–613 (MRQMQMGGGK…WLEVDQKKDI (494 aa)) the chain is on the cytoplasmic side. 192-199 (GPPGTGKT) lines the ATP pocket. A Zn(2+)-binding site is contributed by His414. Residue Glu415 is part of the active site. His418 and Asp492 together coordinate Zn(2+).

In the central section; belongs to the AAA ATPase family. This sequence in the C-terminal section; belongs to the peptidase M41 family. In terms of assembly, homohexamer. Zn(2+) is required as a cofactor.

Its subcellular location is the cell membrane. Functionally, acts as a processive, ATP-dependent zinc metallopeptidase for both cytoplasmic and membrane proteins. Plays a role in the quality control of integral membrane proteins. The sequence is that of ATP-dependent zinc metalloprotease FtsH from Buchnera aphidicola subsp. Schizaphis graminum (strain Sg).